Here is a 434-residue protein sequence, read N- to C-terminus: Nicotinate phosphoribosyltransferase (434 aa).

Residue His242 is modified to Phosphohistidine; by autocatalysis.

Belongs to the NAPRTase family. Transiently phosphorylated on a His residue during the reaction cycle. Phosphorylation strongly increases the affinity for substrates and increases the rate of nicotinate D-ribonucleotide production. Dephosphorylation regenerates the low-affinity form of the enzyme, leading to product release.

The catalysed reaction is nicotinate + 5-phospho-alpha-D-ribose 1-diphosphate + ATP + H2O = nicotinate beta-D-ribonucleotide + ADP + phosphate + diphosphate. Its pathway is cofactor biosynthesis; NAD(+) biosynthesis; nicotinate D-ribonucleotide from nicotinate: step 1/1. In terms of biological role, catalyzes the synthesis of beta-nicotinate D-ribonucleotide from nicotinate and 5-phospho-D-ribose 1-phosphate at the expense of ATP. The polypeptide is Nicotinate phosphoribosyltransferase (Brucella canis (strain ATCC 23365 / NCTC 10854 / RM-666)).